An 82-amino-acid chain; its full sequence is Progonadoliberin-3 (82 aa).

An N-terminal signal peptide occupies residues 1-23; it reads MDLSSKTVVQVVMLALIAQVTFS. Residue Q24 is modified to Pyrrolidone carboxylic acid. Residue G33 is modified to Glycine amide.

This sequence belongs to the GnRH family.

The protein localises to the secreted. Its function is as follows. Stimulates the secretion of gonadotropins. This chain is Progonadoliberin-3 (gnrh3), found in Oncorhynchus masou (Cherry salmon).